The following is a 684-amino-acid chain: ATP-dependent zinc metalloprotease FtsH (684 aa).

At 1–21 (MENKNDMFNKTPKSGKPKMFR) the chain is on the cytoplasmic side. A helical membrane pass occupies residues 22–42 (FNLYWMYGLIFIMLVALYMTN). Residues 43–138 (DSSGTKELGW…QVRFEEGDDA (96 aa)) lie on the Periplasmic side of the membrane. A helical membrane pass occupies residues 139 to 159 (IWNFLVSFGPIILLIGVWMFL). Over 160-684 (MRRMSGGTGA…TEENKTGKIA (525 aa)) the chain is Cytoplasmic. ATP is bound at residue 236-243 (GPPGTGKT). Histidine 459 is a binding site for Zn(2+). The active site involves glutamate 460. The Zn(2+) site is built by histidine 463 and aspartate 534. Residues 647 to 662 (EKANGKNKENADKEAE) are compositionally biased toward basic and acidic residues. Residues 647-684 (EKANGKNKENADKEAEADATTENVTDTPTEENKTGKIA) are disordered.

It in the central section; belongs to the AAA ATPase family. This sequence in the C-terminal section; belongs to the peptidase M41 family. Homohexamer. Requires Zn(2+) as cofactor.

It localises to the cell inner membrane. Acts as a processive, ATP-dependent zinc metallopeptidase for both cytoplasmic and membrane proteins. Plays a role in the quality control of integral membrane proteins. The sequence is that of ATP-dependent zinc metalloprotease FtsH from Parabacteroides distasonis (strain ATCC 8503 / DSM 20701 / CIP 104284 / JCM 5825 / NCTC 11152).